The sequence spans 363 residues: NADH-quinone oxidoreductase subunit H (363 aa).

10 helical membrane-spanning segments follow: residues 29–49 (VLKILLIAVPVIVTVAFYVVW), 62–82 (GPMYVGMGIFQAFADVFKLLF), 96–116 (FIIAPLLTLAPAFAAWSVVPF), 127–147 (VGLLYLLAMTSLGVYGIILAG), 163–183 (AAQVVSYEIAMGFALVGVMIA), 202–222 (FFDWFLIPLFPLFIVYWVSGV), 239–257 (IVAGHMVEYSGGAFALFFL), 264–286 (ILVSFLISIFFLGGWLSPIQGWV), 299–319 (TGGWPWLLMKVFFFASAYIWF), and 339–359 (FIPLTIVWIAVTALMVFYGVI).

Belongs to the complex I subunit 1 family. NDH-1 is composed of 14 different subunits. Subunits NuoA, H, J, K, L, M, N constitute the membrane sector of the complex.

It localises to the cell inner membrane. It catalyses the reaction a quinone + NADH + 5 H(+)(in) = a quinol + NAD(+) + 4 H(+)(out). Its function is as follows. NDH-1 shuttles electrons from NADH, via FMN and iron-sulfur (Fe-S) centers, to quinones in the respiratory chain. The immediate electron acceptor for the enzyme in this species is believed to be ubiquinone. Couples the redox reaction to proton translocation (for every two electrons transferred, four hydrogen ions are translocated across the cytoplasmic membrane), and thus conserves the redox energy in a proton gradient. This subunit may bind ubiquinone. This is NADH-quinone oxidoreductase subunit H from Xanthomonas campestris pv. campestris (strain B100).